The following is a 361-amino-acid chain: Trans-enoyl reductase gkaC (361 aa).

The 343-residue stretch at 15 to 357 folds into the Enoyl reductase (ER) domain; the sequence is EDVGSFEISR…RREISGKKMV (343 aa). NADP(+)-binding positions include 48-51, 172-175, 195-198, tyrosine 213, 260-261, and 351-352; these read CDWK, SSAS, SPKN, FE, and IS.

The protein belongs to the zinc-containing alcohol dehydrogenase family. In terms of assembly, monomer.

The protein operates within mycotoxin biosynthesis. Trans-enoyl reductasee; part of the gene cluster that mediates the biosynthesis of GKK1032, fungal natural products containing a macrocyclic para-cyclophane connected to a decahydrofluorene ring system that show potent antitumor activities. Within the pathway, the PKS-NRPS gkaA, with the help of the trans-enoyl reductase gkaC, synthesize the polyketide-tyrosyl acyl thioester product which can be reductively off-loaded by the terminal reductase (R) domain in gkaA. The PKS module of gkaA acts in combination with the trans-acting enoyl reductase gkaC to produce a methylated polyketide attached to the ACP domain. In parallel, the adenylation (A) domain of the NRPS module activated L-tyrosine, which is then transferred to the ACP domain. The condensation (C) domain subsequently links this group to the polyketide chain, forming an enzyme-bound amide. The alpha/beta hydrolase gkaG is then required to catalyze the subsequent Knoevenagel condensation that affords the 3-pyrrolin-2-one ring, whereas the three proteins gkaB, gkadX and gkaZ then function synergistically to form the cyclophane. The protein is Trans-enoyl reductase gkaC of Penicillium citrinum.